The following is a 612-amino-acid chain: Dihydroxy-acid dehydratase (612 aa).

D81 contacts Mg(2+). Residue C122 participates in [2Fe-2S] cluster binding. Mg(2+) is bound by residues D123 and K124. K124 carries the N6-carboxylysine modification. C193 contributes to the [2Fe-2S] cluster binding site. Position 489 (E489) interacts with Mg(2+). The active-site Proton acceptor is the S515.

It belongs to the IlvD/Edd family. In terms of assembly, homodimer. [2Fe-2S] cluster is required as a cofactor. Requires Mg(2+) as cofactor.

The enzyme catalyses (2R)-2,3-dihydroxy-3-methylbutanoate = 3-methyl-2-oxobutanoate + H2O. It carries out the reaction (2R,3R)-2,3-dihydroxy-3-methylpentanoate = (S)-3-methyl-2-oxopentanoate + H2O. It functions in the pathway amino-acid biosynthesis; L-isoleucine biosynthesis; L-isoleucine from 2-oxobutanoate: step 3/4. It participates in amino-acid biosynthesis; L-valine biosynthesis; L-valine from pyruvate: step 3/4. In terms of biological role, functions in the biosynthesis of branched-chain amino acids. Catalyzes the dehydration of (2R,3R)-2,3-dihydroxy-3-methylpentanoate (2,3-dihydroxy-3-methylvalerate) into 2-oxo-3-methylpentanoate (2-oxo-3-methylvalerate) and of (2R)-2,3-dihydroxy-3-methylbutanoate (2,3-dihydroxyisovalerate) into 2-oxo-3-methylbutanoate (2-oxoisovalerate), the penultimate precursor to L-isoleucine and L-valine, respectively. The sequence is that of Dihydroxy-acid dehydratase from Xanthomonas oryzae pv. oryzae (strain MAFF 311018).